The following is a 1164-amino-acid chain: DNA-directed RNA polymerase 133 kDa polypeptide (1164 aa).

The protein belongs to the RNA polymerase beta chain family. As to quaternary structure, the DNA-dependent RNA polymerase used for intermediate and late genes expression consists of eight subunits 147 kDa, 133 kDa, 35 kDa, 30 kDa, 22 kDa, 19 kDa, 18 kDa and 7 kDa totalling more than 500 kDa in mass. The same holoenzyme, with the addition of the transcription-specificity factor RAP94, is used for early gene expression.

The protein localises to the virion. It catalyses the reaction RNA(n) + a ribonucleoside 5'-triphosphate = RNA(n+1) + diphosphate. Functionally, part of the DNA-dependent RNA polymerase which catalyzes the transcription of viral DNA into RNA using the four ribonucleoside triphosphates as substrates. Responsible for the transcription of early, intermediate and late genes. DNA-dependent RNA polymerase associates with the early transcription factor (ETF), itself composed of OPG118 and OPG133, thereby allowing the early genes transcription. Late transcription, and probably also intermediate transcription, require newly synthesized RNA polymerase. The protein is DNA-directed RNA polymerase 133 kDa polypeptide (OPG151) of Homo sapiens (Human).